Reading from the N-terminus, the 266-residue chain is Methionine aminopeptidase (266 aa).

A substrate-binding site is contributed by His-80. Asp-98, Asp-109, and His-172 together coordinate a divalent metal cation. Substrate is bound at residue His-179. Glu-206 and Glu-237 together coordinate a divalent metal cation.

The protein belongs to the peptidase M24A family. Methionine aminopeptidase type 1 subfamily. In terms of assembly, monomer. Requires Co(2+) as cofactor. Zn(2+) is required as a cofactor. It depends on Mn(2+) as a cofactor. The cofactor is Fe(2+).

It carries out the reaction Release of N-terminal amino acids, preferentially methionine, from peptides and arylamides.. Its function is as follows. Removes the N-terminal methionine from nascent proteins. The N-terminal methionine is often cleaved when the second residue in the primary sequence is small and uncharged (Met-Ala-, Cys, Gly, Pro, Ser, Thr, or Val). Requires deformylation of the N(alpha)-formylated initiator methionine before it can be hydrolyzed. This Buchnera aphidicola subsp. Baizongia pistaciae (strain Bp) protein is Methionine aminopeptidase.